Here is a 121-residue protein sequence, read N- to C-terminus: uncharacterized protein (121 aa).

This is an uncharacterized protein from Schizosaccharomyces pombe (strain 972 / ATCC 24843) (Fission yeast).